Consider the following 722-residue polypeptide: Polyribonucleotide nucleotidyltransferase (722 aa).

Mg(2+) contacts are provided by Asp-487 and Asp-493. The 60-residue stretch at 554–613 (PRMVSFKIHPDKIREVIGKGGATIQALTKETGCSIDIKDDGTVTIASTSAEGMAEAKARI) folds into the KH domain. One can recognise an S1 motif domain in the interval 623 to 691 (GKIYEGPVVK…ERGRLRLSLK (69 aa)).

Belongs to the polyribonucleotide nucleotidyltransferase family. It depends on Mg(2+) as a cofactor.

The protein resides in the cytoplasm. It carries out the reaction RNA(n+1) + phosphate = RNA(n) + a ribonucleoside 5'-diphosphate. Involved in mRNA degradation. Catalyzes the phosphorolysis of single-stranded polyribonucleotides processively in the 3'- to 5'-direction. This chain is Polyribonucleotide nucleotidyltransferase, found in Polynucleobacter necessarius subsp. necessarius (strain STIR1).